Consider the following 531-residue polypeptide: SWI/SNF-related matrix-associated actin-dependent regulator of chromatin subfamily D member 2 (531 aa).

2 positions are modified to asymmetric dimethylarginine: Arg81 and Arg104. Ser203 carries the phosphoserine modification. The tract at residues 205 to 226 is disordered; the sequence is SKAEGDSAGTAGTPGGTPAGDK. Thr217 is subject to Phosphothreonine. A Glycyl lysine isopeptide (Lys-Gly) (interchain with G-Cter in SUMO2) cross-link involves residue Lys226. In terms of domain architecture, SWIB/MDM2 spans 306 to 383; it reads HQPPQYKLDP…PMKLAGLLQH (78 aa).

The protein belongs to the SMARCD family. As to quaternary structure, component of the multiprotein chromatin-remodeling complexes SWI/SNF: SWI/SNF-A (BAF), SWI/SNF-B (PBAF) and related complexes. The canonical complex contains a catalytic subunit (either SMARCA4/BRG1/BAF190A or SMARCA2/BRM/BAF190B), and at least SMARCE1, ACTL6A/BAF53, SMARCC1/BAF155, SMARCC2/BAF170, and SMARCB1/SNF5/BAF47. Other subunits specific to each of the complexes may also be present permitting several possible combinations developmentally and tissue specific. Component of the BAF complex, which includes at least actin (ACTB), ARID1A/BAF250A, ARID1B/BAF250B, SMARCA2/BRM, SMARCA4/BRG1, ACTL6A/BAF53, ACTL6B/BAF53B, SMARCE1/BAF57, SMARCC1/BAF155, SMARCC2/BAF170, SMARCB1/SNF5/INI1, and one or more SMARCD1/BAF60A, SMARCD2/BAF60B, or SMARCD3/BAF60C. In muscle cells, the BAF complex also contains DPF3. Component of the SWI/SNF-B (PBAF) chromatin remodeling complex, at least composed of SMARCA4/BRG1, SMARCB1/BAF47/SNF5, ACTL6A/BAF53A or ACTL6B/BAF53B, SMARCE1/BAF57, SMARCD1/BAF60A, SMARCD2/BAF60B, perhaps SMARCD3/BAF60C, SMARCC1/BAF155, SMARCC2/BAF170, PBRM1/BAF180, ARID2/BAF200 and actin (ACTB). Interacts with UNKL. Interacts with CEBPE. Post-translationally, ubiquitinated through a signaling process involving RAC1 and the RING finger protein UNKL. As to expression, isoform 2 is expressed in the pancreas.

The protein resides in the nucleus. Its function is as follows. Involved in transcriptional activation and repression of select genes by chromatin remodeling (alteration of DNA-nucleosome topology). Component of SWI/SNF chromatin remodeling complexes that carry out key enzymatic activities, changing chromatin structure by altering DNA-histone contacts within a nucleosome in an ATP-dependent manner. Critical regulator of myeloid differentiation, controlling granulocytopoiesis and the expression of genes involved in neutrophil granule formation. In Homo sapiens (Human), this protein is SWI/SNF-related matrix-associated actin-dependent regulator of chromatin subfamily D member 2 (SMARCD2).